A 606-amino-acid chain; its full sequence is UvrABC system protein C (606 aa).

In terms of domain architecture, GIY-YIG spans 18–96; sequence SQPGVYRMMN…IKSLNPRYNI (79 aa). One can recognise a UVR domain in the interval 205-240; that stretch reads TEVLKSITRKMHEAAEEQEYEQAALFRDQIQSLRKI.

This sequence belongs to the UvrC family. In terms of assembly, interacts with UvrB in an incision complex.

It localises to the cytoplasm. Functionally, the UvrABC repair system catalyzes the recognition and processing of DNA lesions. UvrC both incises the 5' and 3' sides of the lesion. The N-terminal half is responsible for the 3' incision and the C-terminal half is responsible for the 5' incision. The protein is UvrABC system protein C of Nitrosospira multiformis (strain ATCC 25196 / NCIMB 11849 / C 71).